The chain runs to 251 residues: Gamma-glutamyl peptidase 5 (251 aa).

In terms of domain architecture, Glutamine amidotransferase type-1 spans 17–214 (STFVKKAYGG…IDRVVNLKLM (198 aa)). Cys-101 functions as the Nucleophile in the catalytic mechanism. Catalysis depends on residues His-193 and Glu-195.

The protein belongs to the peptidase C26 family.

The protein localises to the cytoplasm. It is found in the cytosol. The protein operates within secondary metabolite biosynthesis. In terms of biological role, involved in glucosinolate biosynthesis. Hydrolyzes the gamma-glutamyl peptide bond of several glutathione (GSH) conjugates to produce Cys-Gly conjugates related to glucosinolates. The gamma-Glu-Cys-Gly-GSH conjugates are the sulfur-donating molecule in glucosinolate biosynthesis. This Arabidopsis thaliana (Mouse-ear cress) protein is Gamma-glutamyl peptidase 5.